The primary structure comprises 144 residues: 6-pyruvoyl tetrahydrobiopterin synthase (144 aa).

Positions 1-4 (MNAA) are excised as a propeptide. At Ser-18 the chain carries Phosphoserine. His-23 is a binding site for Zn(2+). Residue Ser-27 is modified to Phosphoserine. Cys-42 functions as the Proton acceptor in the catalytic mechanism. Residues His-48 and His-50 each contribute to the Zn(2+) site. The Charge relay system role is filled by His-89. Tyr-127 carries the post-translational modification Phosphotyrosine. The Charge relay system role is filled by Glu-133.

Belongs to the PTPS family. As to quaternary structure, homohexamer formed of two homotrimers in a head to head fashion. Zn(2+) is required as a cofactor. In terms of processing, phosphorylation of Ser-18 is required for maximal enzyme activity.

It carries out the reaction 7,8-dihydroneopterin 3'-triphosphate = 6-pyruvoyl-5,6,7,8-tetrahydropterin + triphosphate + H(+). It participates in cofactor biosynthesis; tetrahydrobiopterin biosynthesis; tetrahydrobiopterin from 7,8-dihydroneopterin triphosphate: step 1/3. Its function is as follows. Involved in the biosynthesis of tetrahydrobiopterin, an essential cofactor of aromatic amino acid hydroxylases. Catalyzes the transformation of 7,8-dihydroneopterin triphosphate into 6-pyruvoyl tetrahydropterin. This chain is 6-pyruvoyl tetrahydrobiopterin synthase (Pts), found in Rattus norvegicus (Rat).